Reading from the N-terminus, the 321-residue chain is Trem-like transcript 2 protein (321 aa).

The N-terminal stretch at 1–18 (MAPAFLLLLLLWPQGCVS) is a signal peptide. The Extracellular portion of the chain corresponds to 19–268 (GPSADSVYTK…PSIRHQDVYS (250 aa)). One can recognise an Ig-like V-type domain in the interval 20–121 (PSADSVYTKV…ILYPLMGFQL (102 aa)). 2 disulfide bridges follow: Cys-41–Cys-105 and Cys-56–Cys-63. A glycan (N-linked (GlcNAc...) asparagine) is linked at Asn-89. Composition is skewed to polar residues over residues 189–220 (GYSF…NARD) and 227–241 (SIST…RSPT). Positions 189-241 (GYSFTATSTTSQGPRRTMGSQTVTASPSNARDSSAGPESISTKSGDLSTRSPT) are disordered. A helical transmembrane segment spans residues 269–289 (TVLGVVLTLLVLMLIMVYGFW). Residues 290–321 (KKRHMASYSMCSDPSTRDPPGRPEPYVEVYLI) lie on the Cytoplasmic side of the membrane.

As to quaternary structure, interacts with CD276 and this interaction enhances T-cell activation. As to expression, detected in cultured B-cells, T-cell leukemia and monocyte leukemia. Expressed constitutively on CD8 T-cells and induced on CD4 T-cells after activation.

Its subcellular location is the cell membrane. Cell surface receptor that may play a role in the innate and adaptive immune response. Acts as a counter-receptor for CD276 and interaction with CD276 on T-cells enhances T-cell activation. This is Trem-like transcript 2 protein (TREML2) from Homo sapiens (Human).